The primary structure comprises 618 residues: uncharacterized protein (618 aa).

4 disordered regions span residues 70-118 (SSEY…SLPR), 330-352 (LTARTEEEPERHVPEQAVPEVPC), 456-552 (TLPV…PILT), and 587-618 (IPSDAESDCLDPPEQDKCEFYTSDPSHSLKTL). 2 stretches are compositionally biased toward basic and acidic residues: residues 74–84 (KGTRRDSRGYE) and 333–343 (RTEEEPERHVP). Residues 463–481 (TSRPQSPSSLSSKTTGLPL) show a composition bias toward low complexity. Composition is skewed to polar residues over residues 485 to 516 (KPTSLMTDRTSPSNSSSRAQTPSRPITPNSLM) and 609 to 618 (SDPSHSLKTL).

This is an uncharacterized protein from Danio rerio (Zebrafish).